We begin with the raw amino-acid sequence, 1323 residues long: Regulatory protein ADR1 (1323 aa).

At serine 54 the chain carries Phosphoserine. 2 consecutive C2H2-type zinc fingers follow at residues phenylalanine 104–histidine 126 and tyrosine 132–histidine 155. Residues lysine 175 to asparagine 216 are disordered. Residues asparagine 179 to asparagine 206 are compositionally biased toward polar residues. Phosphothreonine is present on residues threonine 188 and threonine 193. Serine 230 carries the post-translational modification Phosphoserine; by PKA; in vitro. At serine 258 the chain carries Phosphoserine. Threonine 259 bears the Phosphothreonine mark. Residues serine 299, serine 323, and serine 325 each carry the phosphoserine modification. Threonine 327 bears the Phosphothreonine mark.

Phosphorylation at Ser-230 by cAMP-dependent protein kinase A does not affect DNA binding but appears to prevent transcription of ADH2 during glucose repression.

It is found in the nucleus. Functionally, required for transcriptional activation of glucose-repressible alcohol dehydrogenase (ADH2). The sequence is that of Regulatory protein ADR1 (ADR1) from Saccharomyces cerevisiae (strain ATCC 204508 / S288c) (Baker's yeast).